The following is a 365-amino-acid chain: Chorismate synthase (365 aa).

Residues 41-60 form a disordered region; it reads MQHDLDRRRPGTSRYTTARR. NADP(+)-binding residues include arginine 48 and arginine 54. FMN contacts are provided by residues 125–127, 238–239, glycine 278, 293–297, and arginine 319; these read RSS, NA, and KPTSS.

It belongs to the chorismate synthase family. Homotetramer. The cofactor is FMNH2.

The catalysed reaction is 5-O-(1-carboxyvinyl)-3-phosphoshikimate = chorismate + phosphate. It participates in metabolic intermediate biosynthesis; chorismate biosynthesis; chorismate from D-erythrose 4-phosphate and phosphoenolpyruvate: step 7/7. Functionally, catalyzes the anti-1,4-elimination of the C-3 phosphate and the C-6 proR hydrogen from 5-enolpyruvylshikimate-3-phosphate (EPSP) to yield chorismate, which is the branch point compound that serves as the starting substrate for the three terminal pathways of aromatic amino acid biosynthesis. This reaction introduces a second double bond into the aromatic ring system. The chain is Chorismate synthase from Shewanella amazonensis (strain ATCC BAA-1098 / SB2B).